Consider the following 379-residue polypeptide: Cyclic di-GMP phosphodiesterase PdeB (379 aa).

The HD-GYP domain occupies 114 to 310; the sequence is FYKKQKKIFI…PLDFIVELND (197 aa).

The cofactor is Mn(2+).

The catalysed reaction is 3',3'-c-di-GMP + 2 H2O = 2 GMP + 2 H(+). Its function is as follows. Phosphodiesterase (PDE) that catalyzes the hydrolysis of cyclic diguanylate (c-di-GMP) to GMP. The polypeptide is Cyclic di-GMP phosphodiesterase PdeB (Borreliella burgdorferi (strain ATCC 35210 / DSM 4680 / CIP 102532 / B31) (Borrelia burgdorferi)).